Here is a 181-residue protein sequence, read N- to C-terminus: MDHQTAEALRAFTQRYCAAWQQQRNSLPRSEELYGVPSPCVVDTQGEAVFWQPQPFSLAQNISAVERALDIVVQQPLHSYYTTQFAGDMTGRFADETLTLLQTWSEEDFQRVQENLIGHLVVQKRLKLAPTLFIATLESGRDVISVCNLSGEVIKETLGTAKRITLSPSLASFLSHLEPVL.

The protein belongs to the Syd family.

The protein localises to the cell inner membrane. Its function is as follows. Interacts with the SecY protein in vivo. May bind preferentially to an uncomplexed state of SecY, thus functioning either as a chelating agent for excess SecY in the cell or as a regulatory factor that negatively controls the translocase function. This Klebsiella pneumoniae (strain 342) protein is Protein Syd.